The sequence spans 70 residues: U2-agatoxin-Ao1n (70 aa).

Residues 1–20 form the signal peptide; that stretch reads MRAIISLLLISAMVFYIIAA. Positions 21 to 34 are excised as a propeptide; sequence VPEEEGLQLSEDER. Intrachain disulfides connect C37–C53, C44–C58, and C52–C68. A Leucine amide modification is found at L69.

This sequence belongs to the neurotoxin 01 (U2-agtx) family. Expressed by the venom gland.

It localises to the secreted. Functionally, insect active toxin causing rapid but reversible paralysis in crickets. No activity shown in mammals. Does not show effect on mammalian voltage-gated calcium channels. This chain is U2-agatoxin-Ao1n, found in Agelena orientalis (Funnel-web spider).